Here is a 142-residue protein sequence, read N- to C-terminus: MAAAVAAAGAGEPQSPDELLPKGDAEKPEEELEEDDDEELDETLSERLWGLTEMFPERVRSAAGATFDLSLFVAQKMYRFSRAALWIGTTSFMILVLPVVFETEKLQMEQQQQLQQRQILLGPNTGLSGGMPGALPSLPGKI.

The span at 1 to 11 (MAAAVAAAGAG) shows a compositional bias: low complexity. Residues 1-42 (MAAAVAAAGAGEPQSPDELLPKGDAEKPEEELEEDDDEELDE) form a disordered region. At alanine 2 the chain carries N-acetylalanine. The Cytoplasmic segment spans residues 2 to 83 (AAAVAAAGAG…AQKMYRFSRA (82 aa)). The residue at position 15 (serine 15) is a Phosphoserine. Over residues 27-42 (KPEEELEEDDDEELDE) the composition is skewed to acidic residues. An import sequence; necessary for mitochondrion outer membrane localization and integration in the TOM complex region spans residues 41–50 (DETLSERLWG). Threonine 43 is modified (phosphothreonine). A Phosphoserine modification is found at serine 45. The tract at residues 83–103 (AALWIGTTSFMILVLPVVFET) is TMD; necessary for mitochondrion outer membrane localization and integration in the TOM complex. Residues 84–103 (ALWIGTTSFMILVLPVVFET) form a helical membrane-spanning segment. Over 104–142 (EKLQMEQQQQLQQRQILLGPNTGLSGGMPGALPSLPGKI) the chain is Mitochondrial intermembrane. The interval 123-142 (PNTGLSGGMPGALPSLPGKI) is C-tail signal; necessary for mitochondrion outer membrane localization and integration in the TOM complex.

This sequence belongs to the Tom22 family. In terms of assembly, forms part of the preprotein translocase complex of the outer mitochondrial membrane (TOM complex) which consists of at least 7 different proteins (TOMM5, TOMM6, TOMM7, TOMM20, TOMM22, TOMM40 and TOMM70). Interacts with TOMM40. Interacts with PPP2R2B. In terms of tissue distribution, ubiquitous.

The protein resides in the mitochondrion outer membrane. Functionally, central receptor component of the translocase of the outer membrane of mitochondria (TOM complex) responsible for the recognition and translocation of cytosolically synthesized mitochondrial preproteins. Together with the peripheral receptor TOM20 functions as the transit peptide receptor and facilitates the movement of preproteins into the translocation pore. Required for the translocation across the mitochondrial outer membrane of cytochrome P450 monooxygenases. In Homo sapiens (Human), this protein is Mitochondrial import receptor subunit TOM22 homolog (TOMM22).